Here is a 233-residue protein sequence, read N- to C-terminus: 2,3-bisphosphoglycerate-dependent phosphoglycerate mutase (233 aa).

Residues 8-15 (RHGQSLWN), 21-22 (TG), R60, 116-119 (ERYY), K127, 143-144 (RR), and 187-188 (GN) each bind substrate. The active-site Tele-phosphohistidine intermediate is the H9. E116 serves as the catalytic Proton donor/acceptor.

Belongs to the phosphoglycerate mutase family. BPG-dependent PGAM subfamily.

The enzyme catalyses (2R)-2-phosphoglycerate = (2R)-3-phosphoglycerate. It functions in the pathway carbohydrate degradation; glycolysis; pyruvate from D-glyceraldehyde 3-phosphate: step 3/5. Its function is as follows. Catalyzes the interconversion of 2-phosphoglycerate and 3-phosphoglycerate. The chain is 2,3-bisphosphoglycerate-dependent phosphoglycerate mutase from Gloeothece citriformis (strain PCC 7424) (Cyanothece sp. (strain PCC 7424)).